The sequence spans 37 residues: Large ribosomal subunit protein bL36 (37 aa).

The protein belongs to the bacterial ribosomal protein bL36 family.

This Dictyoglomus thermophilum (strain ATCC 35947 / DSM 3960 / H-6-12) protein is Large ribosomal subunit protein bL36.